Consider the following 155-residue polypeptide: uncharacterized protein (155 aa).

The signal sequence occupies residues 1 to 23; that stretch reads MKIRSLSRFVLASTMFASFTASA.

It to E.coli YkfB.

This is an uncharacterized protein from Escherichia coli (strain K12).